A 400-amino-acid polypeptide reads, in one-letter code: Argininosuccinate synthase (400 aa).

10–18 (AFSGGLDTT) contacts ATP. Tyr87 is a binding site for L-citrulline. Gly117 serves as a coordination point for ATP. Residues Thr119, Asn123, and Asp124 each contribute to the L-aspartate site. Asn123 contributes to the L-citrulline binding site. Positions 127, 173, 182, 255, and 267 each coordinate L-citrulline.

It belongs to the argininosuccinate synthase family. Type 1 subfamily. Homotetramer.

The protein resides in the cytoplasm. It catalyses the reaction L-citrulline + L-aspartate + ATP = 2-(N(omega)-L-arginino)succinate + AMP + diphosphate + H(+). Its pathway is amino-acid biosynthesis; L-arginine biosynthesis; L-arginine from L-ornithine and carbamoyl phosphate: step 2/3. The chain is Argininosuccinate synthase from Natronomonas pharaonis (strain ATCC 35678 / DSM 2160 / CIP 103997 / JCM 8858 / NBRC 14720 / NCIMB 2260 / Gabara) (Halobacterium pharaonis).